The chain runs to 520 residues: Hydroxymethylglutaryl-CoA synthase, cytoplasmic (520 aa).

Ser-4 bears the Phosphoserine mark. 2 residues coordinate (3S)-3-hydroxy-3-methylglutaryl-CoA: Asp-43 and Ala-44. Residue 44-46 coordinates CoA; that stretch reads AGK. An N6-acetyllysine modification is found at Lys-46. Glu-95 serves as the catalytic Proton donor/acceptor. Positions 129, 167, 171, 221, and 264 each coordinate (3S)-3-hydroxy-3-methylglutaryl-CoA. The Acyl-thioester intermediate role is filled by Cys-129. CoA is bound at residue Asn-167. Ser-221 is a binding site for CoA. His-264 acts as the Proton donor/acceptor in catalysis. Residues Lys-269 and Lys-273 each contribute to the CoA site. (3S)-3-hydroxy-3-methylglutaryl-CoA contacts are provided by Lys-273, Asn-343, and Ser-377. Residue Lys-273 is modified to N6-acetyllysine. The tract at residues 487–520 is disordered; sequence NTATEHIPSPAKKVPRLPATSGEPESAVISNGEH. Residues Ser-495 and Ser-516 each carry the phosphoserine modification.

The protein belongs to the thiolase-like superfamily. HMG-CoA synthase family. In terms of assembly, homodimer.

The protein localises to the cytoplasm. The catalysed reaction is acetoacetyl-CoA + acetyl-CoA + H2O = (3S)-3-hydroxy-3-methylglutaryl-CoA + CoA + H(+). The protein operates within metabolic intermediate biosynthesis; (R)-mevalonate biosynthesis; (R)-mevalonate from acetyl-CoA: step 2/3. In terms of biological role, catalyzes the condensation of acetyl-CoA with acetoacetyl-CoA to form HMG-CoA, which is converted by HMG-CoA reductase (HMGCR) into mevalonate, a precursor for cholesterol synthesis. The chain is Hydroxymethylglutaryl-CoA synthase, cytoplasmic from Rattus norvegicus (Rat).